The sequence spans 235 residues: Ribonuclease PH (235 aa).

Phosphate contacts are provided by residues Arg86 and 124–126 (GTR).

It belongs to the RNase PH family. In terms of assembly, homohexameric ring arranged as a trimer of dimers.

It catalyses the reaction tRNA(n+1) + phosphate = tRNA(n) + a ribonucleoside 5'-diphosphate. In terms of biological role, phosphorolytic 3'-5' exoribonuclease that plays an important role in tRNA 3'-end maturation. Removes nucleotide residues following the 3'-CCA terminus of tRNAs; can also add nucleotides to the ends of RNA molecules by using nucleoside diphosphates as substrates, but this may not be physiologically important. Probably plays a role in initiation of 16S rRNA degradation (leading to ribosome degradation) during starvation. This is Ribonuclease PH from Francisella philomiragia subsp. philomiragia (strain ATCC 25017 / CCUG 19701 / FSC 153 / O#319-036).